The sequence spans 497 residues: Serine hydroxymethyltransferase (497 aa).

Residues Leu-176 and 180–182 (GHL) each bind (6S)-5,6,7,8-tetrahydrofolate. At Lys-289 the chain carries N6-(pyridoxal phosphate)lysine.

Belongs to the SHMT family. As to quaternary structure, homodimer. Pyridoxal 5'-phosphate is required as a cofactor.

The protein localises to the cytoplasm. The catalysed reaction is (6R)-5,10-methylene-5,6,7,8-tetrahydrofolate + glycine + H2O = (6S)-5,6,7,8-tetrahydrofolate + L-serine. It functions in the pathway one-carbon metabolism; tetrahydrofolate interconversion. Its pathway is amino-acid biosynthesis; glycine biosynthesis; glycine from L-serine: step 1/1. In terms of biological role, catalyzes the reversible interconversion of serine and glycine with tetrahydrofolate (THF) serving as the one-carbon carrier. This reaction serves as the major source of one-carbon groups required for the biosynthesis of purines, thymidylate, methionine, and other important biomolecules. Also exhibits THF-independent aldolase activity toward beta-hydroxyamino acids, producing glycine and aldehydes, via a retro-aldol mechanism. In Chlamydia muridarum (strain MoPn / Nigg), this protein is Serine hydroxymethyltransferase.